The primary structure comprises 411 residues: MDYATAIGGVAMFTLIIMGLVAIILAARSRLVSSGDVTIHINDNPENDVVTPAGGKLLQTLASEGIFLSSACGGGGTCAQCRCRVIEGGGSILPTEEGYFTQGEIRNHMRLACQVAVKQDMKIEIDPEFFDVQKWECEVISNDNVATFIKELVLKIPDGEEVNFRAGGYVQLEAPPHEVHYKDFDIAEEYQDDWNNFGIFKYVSKVDEPVIRAYSMANYPDEKGLIKFNIRIASPPPRGPDGIPPGKMSSWTFSLKPGDKVTVSGPYGEFFAKKTEAEMIFVGGGAGMAPMRSHIFDQLKRLNSDRKISFWYGARSIREMFYVEDYDQLEEEFANFEWHVALSDPLPEDNWDGYTGFIHNVLLEEYLKDHPNPEDCEYYMCGPPMMNAAVIDMLHSMGVEDENIMLDDFGG.

A helical transmembrane segment spans residues 6–26 (AIGGVAMFTLIIMGLVAIILA). The 95-residue stretch at 35-129 (GDVTIHINDN…DMKIEIDPEF (95 aa)) folds into the 2Fe-2S ferredoxin-type domain. The [2Fe-2S] cluster site is built by Cys72, Cys78, Cys81, and Cys113. The FAD-binding FR-type domain maps to 132–273 (VQKWECEVIS…SGPYGEFFAK (142 aa)).

This sequence belongs to the NqrF family. As to quaternary structure, composed of six subunits; NqrA, NqrB, NqrC, NqrD, NqrE and NqrF. It depends on [2Fe-2S] cluster as a cofactor. Requires FAD as cofactor.

The protein resides in the cell inner membrane. It carries out the reaction a ubiquinone + n Na(+)(in) + NADH + H(+) = a ubiquinol + n Na(+)(out) + NAD(+). Functionally, NQR complex catalyzes the reduction of ubiquinone-1 to ubiquinol by two successive reactions, coupled with the transport of Na(+) ions from the cytoplasm to the periplasm. The first step is catalyzed by NqrF, which accepts electrons from NADH and reduces ubiquinone-1 to ubisemiquinone by a one-electron transfer pathway. The chain is Na(+)-translocating NADH-quinone reductase subunit F from Psychrobacter cryohalolentis (strain ATCC BAA-1226 / DSM 17306 / VKM B-2378 / K5).